Consider the following 235-residue polypeptide: Phosphoribosylaminoimidazole-succinocarboxamide synthase (235 aa).

The protein belongs to the SAICAR synthetase family.

It catalyses the reaction 5-amino-1-(5-phospho-D-ribosyl)imidazole-4-carboxylate + L-aspartate + ATP = (2S)-2-[5-amino-1-(5-phospho-beta-D-ribosyl)imidazole-4-carboxamido]succinate + ADP + phosphate + 2 H(+). It participates in purine metabolism; IMP biosynthesis via de novo pathway; 5-amino-1-(5-phospho-D-ribosyl)imidazole-4-carboxamide from 5-amino-1-(5-phospho-D-ribosyl)imidazole-4-carboxylate: step 1/2. The polypeptide is Phosphoribosylaminoimidazole-succinocarboxamide synthase (Clostridium acetobutylicum (strain ATCC 824 / DSM 792 / JCM 1419 / IAM 19013 / LMG 5710 / NBRC 13948 / NRRL B-527 / VKM B-1787 / 2291 / W)).